The following is a 227-amino-acid chain: Large ribosomal subunit protein uL3 (227 aa).

An N5-methylglutamine modification is found at Gln154.

This sequence belongs to the universal ribosomal protein uL3 family. In terms of assembly, part of the 50S ribosomal subunit. Forms a cluster with proteins L14 and L19. Post-translationally, methylated by PrmB.

One of the primary rRNA binding proteins, it binds directly near the 3'-end of the 23S rRNA, where it nucleates assembly of the 50S subunit. The sequence is that of Large ribosomal subunit protein uL3 from Acidiphilium cryptum (strain JF-5).